Reading from the N-terminus, the 177-residue chain is NADH-quinone oxidoreductase subunit B (177 aa).

[4Fe-4S] cluster-binding residues include cysteine 53, cysteine 54, cysteine 118, and cysteine 148.

The protein belongs to the complex I 20 kDa subunit family. As to quaternary structure, NDH-1 is composed of 14 different subunits. Subunits NuoB, C, D, E, F, and G constitute the peripheral sector of the complex. The cofactor is [4Fe-4S] cluster.

Its subcellular location is the cell membrane. It carries out the reaction a quinone + NADH + 5 H(+)(in) = a quinol + NAD(+) + 4 H(+)(out). Functionally, NDH-1 shuttles electrons from NADH, via FMN and iron-sulfur (Fe-S) centers, to quinones in the respiratory chain. The immediate electron acceptor for the enzyme in this species is believed to be a menaquinone. Couples the redox reaction to proton translocation (for every two electrons transferred, four hydrogen ions are translocated across the cytoplasmic membrane), and thus conserves the redox energy in a proton gradient. In Anoxybacillus flavithermus (strain DSM 21510 / WK1), this protein is NADH-quinone oxidoreductase subunit B.